Consider the following 393-residue polypeptide: Histidinol dehydrogenase (393 aa).

Positions 112, 171, and 194 each coordinate NAD(+). Positions 217, 239, and 242 each coordinate substrate. The Zn(2+) site is built by Gln-239 and His-242. Active-site proton acceptor residues include Glu-293 and His-294. His-294, Asp-326, Glu-379, and His-384 together coordinate substrate. Asp-326 provides a ligand contact to Zn(2+). Zn(2+) is bound at residue His-384.

This sequence belongs to the histidinol dehydrogenase family. Requires Zn(2+) as cofactor.

The catalysed reaction is L-histidinol + 2 NAD(+) + H2O = L-histidine + 2 NADH + 3 H(+). Its pathway is amino-acid biosynthesis; L-histidine biosynthesis; L-histidine from 5-phospho-alpha-D-ribose 1-diphosphate: step 9/9. Its function is as follows. Catalyzes the sequential NAD-dependent oxidations of L-histidinol to L-histidinaldehyde and then to L-histidine. The protein is Histidinol dehydrogenase of Sulfolobus acidocaldarius (strain ATCC 33909 / DSM 639 / JCM 8929 / NBRC 15157 / NCIMB 11770).